Consider the following 804-residue polypeptide: MGDTMVEPVPVKLSDQSLVLRGNGGSALCVITEGVGEASLVIDPDVAQKACQEVLEKVKMIHGSSVESLDKVDGGDAGDGGSLANGDTEPKLTNTGHTSTSSRINEEESPLDINSVKNARRRQKNNSAKQSWLLRLFECKLFDVSMAISYLYNSKEPGVQAYIGNRLFCFRYEDVDFYLPQLLNMYIHMDEDVGDAIKPYVVHRCRQSINFSLQCAWLLGAYSSDMHISTQRHSRGTKLRKLILSDELKPAHKKREIPPLSLAPDTGLSPSKRTHQRSKSDATVSISLSSNLKRTSSNPKVENDDEPVRLAPEREFIKSLMGIGKRLATLPTKEQKTQRLISELSLLNHKLPARVWLPTAGFDHHVVRVPHTQAVVLNSKDKAPYLIYVEVLECENFETSLVPVRIPENRIRSTRSVENLPECGITHEQRASSFTTVPNYDNDDEAWSVDDIGELQVELPELHTNSCDNISQFSVDSITSQESKDPVFIAAGDIRRRLSEQLAHTPTTFRRDPEDPSAVALKEPWEEKVRRIREGSPYGHFPNWRLLSVIVKCGDDLRQELLASQVLKQLQSIWESERVPLWIRPYKILVISGDSGMIEPVVNAVSIHQVKKQSQLSLLHYFLQEHGSCTTEAFLTAQRNFVQSCAAYCLVCYLLQVKDRHNGNILLDAEGHIIHIDFGFILSSSPRNLGFETSAFKLTAEFVDVMGGLNGDMFNYYKMLMLQGLIAARKHMDKVVQVVEIMQQGSQLPCFHGSSTIRNLKERFHMNMTEEQLQILVEQMVDGSMRSITTKLYDGFQYLTNGIM.

Residues 55 to 245 (LEKVKMIHGS…GTKLRKLILS (191 aa)) enclose the PIK helical domain. Disordered regions lie at residues 69 to 122 (LDKV…ARRR) and 251 to 309 (AHKK…EPVR). Composition is skewed to polar residues over residues 91 to 103 (KLTN…TSSR) and 281 to 300 (DATV…SNPK). The region spanning 523 to 789 (EPWEEKVRRI…MVDGSMRSIT (267 aa)) is the PI3K/PI4K catalytic domain. The G-loop stretch occupies residues 529 to 535 (VRRIREG). A catalytic loop region spans residues 656–664 (QVKDRHNGN). Positions 675–699 (HIDFGFILSSSPRNLGFETSAFKLT) are activation loop.

It belongs to the PI3/PI4-kinase family. Type III PI4K subfamily. Mg(2+) serves as cofactor. Mn(2+) is required as a cofactor.

It localises to the endomembrane system. It is found in the mitochondrion outer membrane. The protein resides in the rough endoplasmic reticulum membrane. It catalyses the reaction a 1,2-diacyl-sn-glycero-3-phospho-(1D-myo-inositol) + ATP = a 1,2-diacyl-sn-glycero-3-phospho-(1D-myo-inositol 4-phosphate) + ADP + H(+). Functionally, phosphorylates phosphatidylinositol (PI) in the first committed step in the production of the second messenger inositol-1,4,5,-trisphosphate (PIP). May play an important role in the inner ear development. In Xenopus laevis (African clawed frog), this protein is Phosphatidylinositol 4-kinase beta (pi4kb).